The following is a 185-amino-acid chain: Elongation factor P (185 aa).

Belongs to the elongation factor P family.

The protein resides in the cytoplasm. Its pathway is protein biosynthesis; polypeptide chain elongation. In terms of biological role, involved in peptide bond synthesis. Stimulates efficient translation and peptide-bond synthesis on native or reconstituted 70S ribosomes in vitro. Probably functions indirectly by altering the affinity of the ribosome for aminoacyl-tRNA, thus increasing their reactivity as acceptors for peptidyl transferase. This chain is Elongation factor P, found in Bacillus velezensis (strain DSM 23117 / BGSC 10A6 / LMG 26770 / FZB42) (Bacillus amyloliquefaciens subsp. plantarum).